Consider the following 414-residue polypeptide: TBC domain-containing protein C1778.09 (414 aa).

In terms of domain architecture, Rab-GAP TBC spans 158–343 (GIPDCWRSIA…RIWDLLFLLG (186 aa)).

The protein resides in the cytoplasm. It localises to the nucleus. The sequence is that of TBC domain-containing protein C1778.09 from Schizosaccharomyces pombe (strain 972 / ATCC 24843) (Fission yeast).